The chain runs to 194 residues: Lachesicidin (194 aa).

The signal sequence occupies residues 1–22; the sequence is MQGFFWKTWLVLAVCGTPASLA. Residues 23–160 constitute a propeptide that is removed on maturation; it reads HRPLSYGEAL…DEEKDQPKRV (138 aa). Disulfide bonds link Cys79/Cys90 and Cys101/Cys118. The span at 125–154 shows a compositional bias: acidic residues; it reads EEEEEEEEEEQKAEAENDEEVEKEKEDEEK. Residues 125 to 157 form a disordered region; the sequence is EEEEEEEEEEQKAEAENDEEVEKEKEDEEKDQP.

Belongs to the cathelicidin family. As to expression, expressed by the venom gland.

The protein resides in the secreted. The protein localises to the target cell membrane. Potent antimicrobial peptide against Gram-negative and Gram-positive bacteria. Adopts an amphipathic alpha helical conformation, that may allow to partition into the target membrane. Low hemolytic activities have been observed on mammalian cells. In Lachesis muta rhombeata (Bushmaster), this protein is Lachesicidin.